Consider the following 504-residue polypeptide: Cytochrome P450 4A25 (504 aa).

Transmembrane regions (helical) follow at residues 6 to 26 and 110 to 130; these read LASA…LLLL and APVL…LLNG. Cys451 is a heme binding site.

This sequence belongs to the cytochrome P450 family. Heme serves as cofactor.

Its subcellular location is the endoplasmic reticulum membrane. It carries out the reaction an omega-methyl-long-chain fatty acid + reduced [NADPH--hemoprotein reductase] + O2 = an omega-hydroxy-long-chain fatty acid + oxidized [NADPH--hemoprotein reductase] + H2O + H(+). Its function is as follows. Catalyzes the omega- and (omega-1)-hydroxylation of various fatty acids such as laurate and palmitate. Has no activity toward taurochenodeoxycholic acid. The protein is Cytochrome P450 4A25 (CYP4A25) of Sus scrofa (Pig).